We begin with the raw amino-acid sequence, 123 residues long: UPF0299 membrane protein VV1471 (123 aa).

4 consecutive transmembrane segments (helical) span residues 8 to 28 (LFGL…GSGI), 35 to 55 (SVPG…IGLV), 71 to 91 (MILL…MLIA), and 94 to 114 (LPII…LGWL).

The protein belongs to the UPF0299 family.

Its subcellular location is the cell inner membrane. This Vibrio vulnificus (strain YJ016) protein is UPF0299 membrane protein VV1471.